We begin with the raw amino-acid sequence, 879 residues long: Beta-alanyl-bioamine nonribosomal peptide synthetase ebony (879 aa).

Residues 26 to 540 (FEEQQLRHAD…EHVPLLVNGK (515 aa)) form an adenylation region. In terms of domain architecture, Carrier spans 573 to 650 (EDLKLTARDL…EIIEKMAANH (78 aa)). Position 611 is an O-(pantetheine 4'-phosphoryl)serine (S611). The interval 666-679 (LKMEAVPLRLEHRQ) is condensation. Residue E696 coordinates dopamine. Residue E696 coordinates histamine. Beta-alanine contacts are provided by T825 and N827.

It belongs to the NRP synthetase family. Pantetheine 4'-phosphate serves as cofactor. Mg(2+) is required as a cofactor. Expressed in the optic neuropils in the lamina and in distinct cells at the distal border of the medulla cortex (at protein level). Expressed in the protocerebrum and thoracic ganglia (at protein level). Expressed in antennal lobes, antennal nerves and subesophagic ganglion (at protein level). Specifically, expressed in epithelial glial cells of the medulla that surround the synaptic cleft of photoreceptor axonal endings (at protein level). Expressed in some cells in the cuticle.

It is found in the cytoplasm. The catalysed reaction is histamine + beta-alanine + ATP = carcinine + AMP + diphosphate + H(+). The enzyme catalyses beta-alanine + ATP + H(+) = beta-alanyl-5'-AMP + diphosphate. It catalyses the reaction beta-alanyl-5'-AMP + holo-[peptidyl-carrier protein] = beta-alanyl-[peptidyl-carrier protein] + AMP + H(+). It carries out the reaction beta-alanyl-[peptidyl-carrier protein] + histamine = carcinine + holo-[peptidyl-carrier protein] + H(+). The catalysed reaction is dopamine + beta-alanine + ATP = beta-alanyl-dopamine + AMP + diphosphate + H(+). The enzyme catalyses beta-alanyl-[peptidyl-carrier protein] + dopamine = beta-alanyl-dopamine + holo-[peptidyl-carrier protein] + H(+). Nonribosomal peptide synthase which is required for the regulation of histamine and dopamine levels in various tissues through their condensation with beta-alanine. In epithelial glial cells, plays an essential role in the inactivation of histamine, the main neurotransmitter in the optical nerve system, by catalyzing the conversion of histamine into carcinine. In the cuticle, catalyzes the condensation of beta-alanine with dopamine to form beta-alanyl-dopamine (NBAD), a metabolite involved in the pigmentation and sclerotization of the insect cuticle. Also, regulates the cuticular hydrocarbon composition in females. Acts downstream of the body clock to regulate circadian behavioral rhythms. Can also condense beta-alanine with biogenic amines tyramine, octopamine, and serotonin in vitro. This is Beta-alanyl-bioamine nonribosomal peptide synthetase ebony from Drosophila melanogaster (Fruit fly).